Consider the following 398-residue polypeptide: uncharacterized protein (398 aa).

Belongs to the class-V pyridoxal-phosphate-dependent aminotransferase family. As to quaternary structure, homodimer.

In terms of biological role, is essential for optimal growth. This is an uncharacterized protein from Mycobacterium tuberculosis (strain CDC 1551 / Oshkosh).